A 341-amino-acid chain; its full sequence is uncharacterized protein (341 aa).

Helical transmembrane passes span 10–30, 42–62, 107–127, 129–149, 155–175, 192–212, 226–246, 263–283, 290–310, and 313–333; these read ALGVVLLLFVVFLWLISSFLT, PFLITYINTGTFVFYLIPWYF, LGFCIIWFAANYFSNSSLGFT, VASFTIISSMSGFFTLGLGTI, FTLSKLLALMASVGGVIIVVT, ALGNAYALLAALLYGCYSVMV, LFFGLVGLFDLILLWPFLIIL, LIVLIINASITFVSDYLWVIA, LLVTVGMSLSIPLALFFDILL, and HYLNFSLILGSLLVFAGFIVV.

This sequence belongs to the TPT transporter family.

The protein localises to the vacuole membrane. The protein resides in the golgi apparatus membrane. This is an uncharacterized protein from Schizosaccharomyces pombe (strain 972 / ATCC 24843) (Fission yeast).